We begin with the raw amino-acid sequence, 104 residues long: uncharacterized protein (104 aa).

The segment at 55 to 104 is disordered; that stretch reads RPFSSDRINRPFSPDKKGEPIFPDKRDRPFSPDRINRPFSPDKKGEPIFP.

It localises to the plastid. This is an uncharacterized protein from Euglena longa (Euglenophycean alga).